The chain runs to 431 residues: Glutamyl-tRNA reductase (431 aa).

Substrate is bound by residues 49–52 (TCDR), Ser-109, 114–116 (EPH), and Gln-120. The Nucleophile role is filled by Cys-50. Residue 189-194 (GTQEMG) participates in NADP(+) binding.

It belongs to the glutamyl-tRNA reductase family. Homodimer.

It carries out the reaction (S)-4-amino-5-oxopentanoate + tRNA(Glu) + NADP(+) = L-glutamyl-tRNA(Glu) + NADPH + H(+). It participates in porphyrin-containing compound metabolism; protoporphyrin-IX biosynthesis; 5-aminolevulinate from L-glutamyl-tRNA(Glu): step 1/2. The protein operates within porphyrin-containing compound metabolism; chlorophyll biosynthesis. Functionally, catalyzes the NADPH-dependent reduction of glutamyl-tRNA(Glu) to glutamate 1-semialdehyde (GSA). This Rhodospirillum rubrum (strain ATCC 11170 / ATH 1.1.1 / DSM 467 / LMG 4362 / NCIMB 8255 / S1) protein is Glutamyl-tRNA reductase.